Reading from the N-terminus, the 556-residue chain is Cytochrome P450 monooxygenase polC (556 aa).

A helical membrane pass occupies residues 17-37 (LCFAISLLCAVAIATFLHKLY). Heme is bound at residue Cys479.

This sequence belongs to the cytochrome P450 family. It depends on heme as a cofactor.

The protein localises to the membrane. The catalysed reaction is motiol + 3 reduced [NADPH--hemoprotein reductase] + 3 O2 = 4beta-carboxyl motiol + 3 oxidized [NADPH--hemoprotein reductase] + 4 H2O + 4 H(+). Its pathway is secondary metabolite biosynthesis; terpenoid biosynthesis. Functionally, cytochrome P450 monooxygenase; part of the gene cluster that mediates the biosynthesis of antifungal fernane-type triterpenoid polytolypin. PolC uses motiol as a substrate and converts the methyl group at position C-4 to a carboxyl group. Within the pathway, the triterpene cyclase polA first catalyzes the cyclization of 2,3-oxidosqualene to motiol, polC converts the 4-alpha-methyl group of motiol to a carboxyl group, polB is responsible for appending a hydroxyl group at the 2-alpha position and polE is a dual functional P450, which can catalyze the formation of both the 1-beta-hydroxyl group and 10-beta-carboxyl group. This chain is Cytochrome P450 monooxygenase polC, found in Polytolypa hystricis (strain UAMH7299).